Reading from the N-terminus, the 88-residue chain is MALVRSLLGAKKILSRSTASAAPKGFLAVYVGESQKKRYLVPLSYLSQPSFQALLSKSEEEFGFDHPMGGLTIPCPEDTFINVTSRLQ.

This sequence belongs to the ARG7 family.

It is found in the cell membrane. In terms of biological role, functions as a positive effector of cell expansion through modulation of auxin transport. This is Auxin-responsive protein SAUR21 from Arabidopsis thaliana (Mouse-ear cress).